The sequence spans 334 residues: Protein-methionine-sulfoxide reductase catalytic subunit MsrP (334 aa).

The tat-type signal signal peptide spans 1 to 44; that stretch reads MKKNQFLKESDVTAESVFFMKRRQVLKALGISAAALSLPHAAHA. Mo-molybdopterin is bound by residues Asn-88, 91-92, Cys-146, Thr-181, Asn-233, Arg-238, and 249-251; these read YE and GIK.

Belongs to the MsrP family. Heterodimer of a catalytic subunit (MsrP) and a heme-binding subunit (MsrQ). The cofactor is Mo-molybdopterin. Predicted to be exported by the Tat system. The position of the signal peptide cleavage has not been experimentally proven.

It localises to the periplasm. The catalysed reaction is L-methionyl-[protein] + a quinone + H2O = L-methionyl-(S)-S-oxide-[protein] + a quinol. It carries out the reaction L-methionyl-[protein] + a quinone + H2O = L-methionyl-(R)-S-oxide-[protein] + a quinol. Its function is as follows. Part of the MsrPQ system that repairs oxidized periplasmic proteins containing methionine sulfoxide residues (Met-O), using respiratory chain electrons. Thus protects these proteins from oxidative-stress damage caused by reactive species of oxygen and chlorine generated by the host defense mechanisms. MsrPQ is essential for the maintenance of envelope integrity under bleach stress, rescuing a wide series of structurally unrelated periplasmic proteins from methionine oxidation, including the primary periplasmic chaperone SurA and the lipoprotein Pal. The catalytic subunit MsrP is non-stereospecific, being able to reduce both (R-) and (S-) diastereoisomers of methionine sulfoxide. This Escherichia coli O81 (strain ED1a) protein is Protein-methionine-sulfoxide reductase catalytic subunit MsrP.